Consider the following 341-residue polypeptide: Probable UDP-glucuronate 4-epimerase (341 aa).

The active-site Proton acceptor is the Tyr-152.

This sequence belongs to the NAD(P)-dependent epimerase/dehydratase family. Requires NAD(+) as cofactor.

It catalyses the reaction UDP-alpha-D-glucuronate = UDP-alpha-D-galacturonate. In Rhizobium meliloti (strain 1021) (Ensifer meliloti), this protein is Probable UDP-glucuronate 4-epimerase.